A 212-amino-acid polypeptide reads, in one-letter code: Pyrrolidone-carboxylate peptidase (212 aa).

Active-site residues include Glu-80, Cys-143, and His-165.

It belongs to the peptidase C15 family. As to quaternary structure, homotetramer.

The protein localises to the cytoplasm. It catalyses the reaction Release of an N-terminal pyroglutamyl group from a polypeptide, the second amino acid generally not being Pro.. Its function is as follows. Removes 5-oxoproline from various penultimate amino acid residues except L-proline. This is Pyrrolidone-carboxylate peptidase from Vibrio vulnificus (strain YJ016).